The primary structure comprises 217 residues: Uracil-DNA glycosylase (217 aa).

Aspartate 62 functions as the Proton acceptor in the catalytic mechanism.

This sequence belongs to the uracil-DNA glycosylase (UDG) superfamily. UNG family.

Its subcellular location is the cytoplasm. The enzyme catalyses Hydrolyzes single-stranded DNA or mismatched double-stranded DNA and polynucleotides, releasing free uracil.. Excises uracil residues from the DNA which can arise as a result of misincorporation of dUMP residues by DNA polymerase or due to deamination of cytosine. The protein is Uracil-DNA glycosylase of Streptococcus pyogenes serotype M49 (strain NZ131).